A 267-amino-acid chain; its full sequence is Putative carbamate hydrolase RutD (267 aa).

One can recognise an AB hydrolase-1 domain in the interval 14-115 (PTLVLSAGLG…EKLVVVNGWP (102 aa)).

Belongs to the AB hydrolase superfamily. Hydrolase RutD family.

The catalysed reaction is carbamate + 2 H(+) = NH4(+) + CO2. Its function is as follows. Involved in pyrimidine catabolism. May facilitate the hydrolysis of carbamate, a reaction that can also occur spontaneously. This is Putative carbamate hydrolase RutD from Serratia proteamaculans (strain 568).